The primary structure comprises 266 residues: 3-deoxy-manno-octulosonate cytidylyltransferase (266 aa).

Belongs to the KdsB family.

Its subcellular location is the cytoplasm. It catalyses the reaction 3-deoxy-alpha-D-manno-oct-2-ulosonate + CTP = CMP-3-deoxy-beta-D-manno-octulosonate + diphosphate. It functions in the pathway nucleotide-sugar biosynthesis; CMP-3-deoxy-D-manno-octulosonate biosynthesis; CMP-3-deoxy-D-manno-octulosonate from 3-deoxy-D-manno-octulosonate and CTP: step 1/1. The protein operates within bacterial outer membrane biogenesis; lipopolysaccharide biosynthesis. Activates KDO (a required 8-carbon sugar) for incorporation into bacterial lipopolysaccharide in Gram-negative bacteria. The chain is 3-deoxy-manno-octulosonate cytidylyltransferase from Paraburkholderia xenovorans (strain LB400).